Here is a 193-residue protein sequence, read N- to C-terminus: uncharacterized protein (193 aa).

Residues 86 to 181 (TKQRELLEIL…QVEEVQAEVG (96 aa)) adopt a coiled-coil conformation.

This is an uncharacterized protein from Streptococcus pyogenes serotype M6 (strain ATCC BAA-946 / MGAS10394).